Consider the following 586-residue polypeptide: Asparagine synthetase [glutamine-hydrolyzing] (586 aa).

Cys-2 acts as the For GATase activity in catalysis. Positions 2–185 (CGILAVLGCS…PGHLYSSKSG (184 aa)) constitute a Glutamine amidotransferase type-2 domain. L-glutamine-binding positions include 50 to 54 (RLAII), 75 to 77 (NGE), and Asp-98. An Asparagine synthetase domain is found at 194-517 (PPWFNESVPS…PQNSARLTVP (324 aa)). Residues Leu-232, Val-268, and 342-343 (SG) each bind ATP.

The protein belongs to the asparagine synthetase family.

The catalysed reaction is L-aspartate + L-glutamine + ATP + H2O = L-asparagine + L-glutamate + AMP + diphosphate + H(+). It functions in the pathway amino-acid biosynthesis; L-asparagine biosynthesis; L-asparagine from L-aspartate (L-Gln route): step 1/1. This is Asparagine synthetase [glutamine-hydrolyzing] from Brassica oleracea (Wild cabbage).